The primary structure comprises 340 residues: MKEDQVVQEESGFQDDEESLFQDIDLLQKHGINMADIKKLKSVGICTIKGIQMTTRRALCNVKGLSEAKVEKIKEAANKLIEPGFLTAFQYSERRKMVFHITTGSQEFDKLLGGGIESMAITEAFGEFRTGKTQLSHTLCVTAQLPGTGGYSGGKIIFIDTENTFRPDRLRDIADRFNVDHEAVLDNVLYARAYTSEHQMELLDYVAAKFHEEAGIFKLLIIDSIMALFRVDFSGRGELAERQQKLAQMLSRLQKISEEYNVAVFVTNQMTADPGATMTFQADPKKPIGGHILAHASTTRISLRKGRGELRIAKIYDSPEMPENEATFAITAGGIGDAKE.

126 to 133 (GEFRTGKT) contacts ATP. Arg-230 contacts dsDNA. Arg-230, Phe-233, Arg-236, Arg-242, and Arg-311 together coordinate ssDNA. Residues Arg-236 and Arg-242 each contribute to the dsDNA site.

Belongs to the RecA family. DMC1 subfamily. Double stacked ring-shaped homooctamer. Interacts with BRCA2. Interacts with the MND1-PSMC3IP heterodimer. Interacts with RAD51AP1; the interaction is direct and stimulates DMC1-mediated homologous recombination. Testis.

It is found in the nucleus. Its subcellular location is the chromosome. Functionally, participates in meiotic recombination, specifically in homologous strand assimilation, which is required for the resolution of meiotic double-strand breaks. The chain is Meiotic recombination protein DMC1/LIM15 homolog from Mus musculus (Mouse).